The sequence spans 407 residues: MGCLCLYRSTLLTGGLLFLLMLADPAFPAGSRPPVVLVPGDMGNQLEAKLDKPSVVHYVCSKRTDHYFTLWLNLELLLPVIIDCWIDNVRLIYNQTSHTTQFPEGVDVRVPGFGDTFSMEFLDPSKSSVGSYLHTMVESLVSWGYERGKDVRGAPYDWRRAPNENGPYFLALRKMIEEMYQLYGGPVVLVAHSMGNMYMLYFLQHQPQDWKDKYIRAFVALGPPWGGVPKTLRVLASGDNNRIPVIRSLKIRAQQRSAVSTTWLLPYSYTWSPQKVFVRTPKANYTLQDYRQFFQDIGFKDGWSMRQDTEGLVEATVPPGVRLHCLYGTGVPTPESFDYESFPDRDPKIHYGTGDGTVNLQSALHCHTWRGLQKQEVSLQALPGNEHIAMLANTTTLAYLKRVLLGP.

A signal peptide spans 1–29 (MGCLCLYRSTLLTGGLLFLLMLADPAFPA). Asp-41 is a binding site for substrate. An intrachain disulfide couples Cys-60 to Cys-84. N-linked (GlcNAc...) asparagine glycosylation occurs at Asn-94. Ser-193 serves as the catalytic Acyl-ester intermediate. A Zn(2+)-binding site is contributed by Ser-193. Met-194 contributes to the substrate binding site. A glycan (N-linked (GlcNAc...) asparagine) is linked at Asn-284. Catalysis depends on charge relay system residues Asp-355 and His-387. Residue His-387 participates in Zn(2+) binding. N-linked (GlcNAc...) asparagine glycosylation is present at Asn-393.

It belongs to the AB hydrolase superfamily. Lipase family. Post-translationally, N-glycosylated. In terms of processing, N-glycosylated. N-glycosylation is important for maturation of the enzyme and normal subcellular location. As to expression, detected in brain (at protein level).

The protein resides in the lysosome. The protein localises to the secreted. It localises to the membrane. The enzyme catalyses a 1,2-diacyl-sn-glycero-3-phosphocholine + H2O = a 2-acyl-sn-glycero-3-phosphocholine + a fatty acid + H(+). The catalysed reaction is 1-hexadecanoyl-2-(9Z-octadecenoyl)-sn-glycero-3-phosphocholine + H2O = 2-(9Z-octadecenoyl)-sn-glycero-3-phosphocholine + hexadecanoate + H(+). It carries out the reaction 1,2-di-(9Z-octadecenoyl)-sn-glycero-3-phosphocholine + H2O = 2-(9Z-octadecenoyl)-sn-glycero-3-phosphocholine + (9Z)-octadecenoate + H(+). It catalyses the reaction 1-hexadecanoyl-2-glutaroyl-sn-glycero-3-phosphocholine + H2O = 2-glutaroyl-sn-glycero-3-phosphocholine + hexadecanoate + H(+). The enzyme catalyses 1-hexadecanoyl-2-nonadioyl-sn-glycero-3-phosphocholine + H2O = 2-nonadioyl-sn-glycero-3-phosphocholine + hexadecanoate + H(+). The catalysed reaction is 1-hexadecanoyl-2-(5-oxopentanoyl)-sn-glycero-3-phosphocholine + H2O = 2-(5-oxopentanoyl)-sn-glycero-3-phosphocholine + hexadecanoate + H(+). It carries out the reaction 1-hexadecanoyl-2-(9-oxononanoyl)-sn-glycero-3-phosphocholine + H2O = 2-(9-oxononanoyl)-sn-glycero-3-phosphocholine + hexadecanoate + H(+). It catalyses the reaction 1,2-dihexadecanoyl-sn-glycero-3-phosphocholine + H2O = 2-hexadecanoyl-sn-glycero-3-phosphocholine + hexadecanoate + H(+). The enzyme catalyses a 1,2-diacyl-sn-glycero-3-phosphocholine + H2O = a 1-acyl-sn-glycero-3-phosphocholine + a fatty acid + H(+). The catalysed reaction is 1-hexadecanoyl-2-(9Z-octadecenoyl)-sn-glycero-3-phosphocholine + H2O = 1-hexadecanoyl-sn-glycero-3-phosphocholine + (9Z)-octadecenoate + H(+). It carries out the reaction 1,2-di-(9Z-octadecenoyl)-sn-glycero-3-phosphocholine + H2O = 1-(9Z-octadecenoyl)-sn-glycero-3-phosphocholine + (9Z)-octadecenoate + H(+). It catalyses the reaction 1,2-dihexadecanoyl-sn-glycero-3-phosphocholine + H2O = 1-hexadecanoyl-sn-glycero-3-phosphocholine + hexadecanoate + H(+). The enzyme catalyses a 1-acyl-sn-glycero-3-phosphocholine + H2O = sn-glycerol 3-phosphocholine + a fatty acid + H(+). The catalysed reaction is 1-hexadecanoyl-sn-glycero-3-phosphocholine + H2O = sn-glycerol 3-phosphocholine + hexadecanoate + H(+). It carries out the reaction N-(acetyl)-sphing-4-enine + a 1,2-diacyl-sn-glycero-3-phosphoethanolamine = 1-O-acyl-N-(acetyl)-sphing-4-enine + a 2-acyl-sn-glycero-3-phosphoethanolamine. It catalyses the reaction 1-hexadecanoyl-2-(9Z-octadecenoyl)-sn-glycero-3-phosphoethanolamine + N-(acetyl)-sphing-4-enine = 2-(9Z-octadecenoyl)-sn-glycero-3-phosphoethanolamine + 1-hexadecanoyl-N-(acetyl)-sphing-4-enine. The enzyme catalyses 1-hexadecanoyl-2-(9Z,12Z-octadecadienoyl)-sn-glycero-3-phosphoethanolamine + N-(acetyl)-sphing-4-enine = 2-(9Z,12Z)-octadecadienoyl-sn-glycero-3-phosphoethanolamine + 1-hexadecanoyl-N-(acetyl)-sphing-4-enine. The catalysed reaction is 1-hexadecanoyl-2-(5Z,8Z,11Z,14Z-eicosatetraenoyl)-sn-glycero-3-phosphoethanolamine + N-(acetyl)-sphing-4-enine = 2-(5Z,8Z,11Z,14Z)-eicosatetraenoyl-sn-glycero-3-phosphoethanolamine + 1-hexadecanoyl-N-(acetyl)-sphing-4-enine. It carries out the reaction N-(acetyl)-sphing-4-enine + a 1,2-diacyl-sn-glycero-3-phosphoethanolamine = 1-O-acyl-N-(acetyl)-sphing-4-enine + a 1-acyl-sn-glycero-3-phosphoethanolamine. It catalyses the reaction 1-hexadecanoyl-2-(9Z-octadecenoyl)-sn-glycero-3-phosphoethanolamine + N-(acetyl)-sphing-4-enine = 1-(9Z-octadecenoyl)-N-(acetyl)-sphing-4-enine + 1-hexadecanoyl-sn-glycero-3-phosphoethanolamine. The enzyme catalyses 1-hexadecanoyl-2-(9Z,12Z-octadecadienoyl)-sn-glycero-3-phosphoethanolamine + N-(acetyl)-sphing-4-enine = 1-(9Z,12Z-octadecadienoyl)-N-acetylsphing-4-enine + 1-hexadecanoyl-sn-glycero-3-phosphoethanolamine. The catalysed reaction is 1-hexadecanoyl-2-(5Z,8Z,11Z,14Z-eicosatetraenoyl)-sn-glycero-3-phosphoethanolamine + N-(acetyl)-sphing-4-enine = 1-(5Z,8Z,11Z,14Z)-eicosatetraenoyl-N-(acetyl)-sphing-4-enine + 1-hexadecanoyl-sn-glycero-3-phosphoethanolamine. It carries out the reaction N-(acetyl)-sphing-4-enine + a 1,2-diacyl-sn-glycero-3-phosphocholine = 1-O-acyl-N-(acetyl)-sphing-4-enine + a 2-acyl-sn-glycero-3-phosphocholine. It catalyses the reaction 1-hexadecanoyl-2-(9Z-octadecenoyl)-sn-glycero-3-phosphocholine + N-(acetyl)-sphing-4-enine = 1-hexadecanoyl-N-(acetyl)-sphing-4-enine + 2-(9Z-octadecenoyl)-sn-glycero-3-phosphocholine. The enzyme catalyses 1-hexadecanoyl-2-(9Z,12Z-octadecadienoyl)-sn-glycero-3-phosphocholine + N-(acetyl)-sphing-4-enine = 2-(9Z,12Z-octadecadienoyl)-sn-glycero-3-phosphocholine + 1-hexadecanoyl-N-(acetyl)-sphing-4-enine. The catalysed reaction is 1-hexadecanoyl-2-(5Z,8Z,11Z,14Z-eicosatetraenoyl)-sn-glycero-3-phosphocholine + N-(acetyl)-sphing-4-enine = 1-hexadecanoyl-N-(acetyl)-sphing-4-enine + 2-(5Z,8Z,11Z,14Z)-eicosatetraenoyl-sn-glycero-3-phosphocholine. It carries out the reaction 1-hexadecanoyl-2-(4Z,7Z,10Z,13Z,16Z,19Z-docosahexaenoyl)-sn-glycero-3-phosphocholine + N-(acetyl)-sphing-4-enine = 2-(4Z,7Z,10Z,13Z,16Z,19Z-docosahexaenoyl)-sn-glycero-3-phosphocholine + 1-hexadecanoyl-N-(acetyl)-sphing-4-enine. It catalyses the reaction 1-hexadecanoyl-2-nonadioyl-sn-glycero-3-phosphocholine + N-(acetyl)-sphing-4-enine = 2-nonadioyl-sn-glycero-3-phosphocholine + 1-hexadecanoyl-N-(acetyl)-sphing-4-enine. The enzyme catalyses 1-octadecanoyl-2-(9Z-octadecenoyl)-sn-glycero-3-phosphocholine + N-(acetyl)-sphing-4-enine = 1-octadecanoyl-N-(acetyl)-sphing-4-enine + 2-(9Z-octadecenoyl)-sn-glycero-3-phosphocholine. The catalysed reaction is 1-(9Z)-octadecenoyl-2-octadecanoyl-sn-glycero-3-phosphocholine + N-(acetyl)-sphing-4-enine = 2-octadecanoyl-sn-glycero-3-phosphocholine + 1-(9Z-octadecenoyl)-N-(acetyl)-sphing-4-enine. It carries out the reaction 1-octadecanoyl-2-(5Z,8Z,11Z,14Z-eicosatetraenoyl)-sn-glycero-3-phosphocholine + N-(acetyl)-sphing-4-enine = 1-octadecanoyl-N-(acetyl)-sphing-4-enine + 2-(5Z,8Z,11Z,14Z)-eicosatetraenoyl-sn-glycero-3-phosphocholine. It catalyses the reaction 1-(9Z-octadecenoyl)-2-hexadecanoyl-sn-glycero-3-phosphocholine + N-(acetyl)-sphing-4-enine = 1-(9Z-octadecenoyl)-N-(acetyl)-sphing-4-enine + 2-hexadecanoyl-sn-glycero-3-phosphocholine. The enzyme catalyses N-(acetyl)-sphing-4-enine + a 1,2-diacyl-sn-glycero-3-phosphocholine = 1-O-acyl-N-(acetyl)-sphing-4-enine + a 1-acyl-sn-glycero-3-phosphocholine. The catalysed reaction is 1-hexadecanoyl-2-(9Z-octadecenoyl)-sn-glycero-3-phosphocholine + N-(acetyl)-sphing-4-enine = 1-(9Z-octadecenoyl)-N-(acetyl)-sphing-4-enine + 1-hexadecanoyl-sn-glycero-3-phosphocholine. It carries out the reaction 1-hexadecanoyl-2-(9Z,12Z-octadecadienoyl)-sn-glycero-3-phosphocholine + N-(acetyl)-sphing-4-enine = 1-(9Z,12Z-octadecadienoyl)-N-acetylsphing-4-enine + 1-hexadecanoyl-sn-glycero-3-phosphocholine. It catalyses the reaction 1-hexadecanoyl-2-(5Z,8Z,11Z,14Z-eicosatetraenoyl)-sn-glycero-3-phosphocholine + N-(acetyl)-sphing-4-enine = 1-(5Z,8Z,11Z,14Z)-eicosatetraenoyl-N-(acetyl)-sphing-4-enine + 1-hexadecanoyl-sn-glycero-3-phosphocholine. The enzyme catalyses 1-hexadecanoyl-2-(4Z,7Z,10Z,13Z,16Z,19Z-docosahexaenoyl)-sn-glycero-3-phosphocholine + N-(acetyl)-sphing-4-enine = 1-(4Z,7Z,10Z,13Z,16Z,19Z-docosahexaenoyl)-N-(acetyl)-sphing-4-enine + 1-hexadecanoyl-sn-glycero-3-phosphocholine. The catalysed reaction is 1-octadecanoyl-2-(9Z-octadecenoyl)-sn-glycero-3-phosphocholine + N-(acetyl)-sphing-4-enine = 1-(9Z-octadecenoyl)-N-(acetyl)-sphing-4-enine + 1-octadecanoyl-sn-glycero-3-phosphocholine. It carries out the reaction 1-octadecanoyl-2-(9Z,12Z)-octadecadienoyl-sn-glycero-3-phosphocholine + N-(acetyl)-sphing-4-enine = 1-(9Z,12Z-octadecadienoyl)-N-acetylsphing-4-enine + 1-octadecanoyl-sn-glycero-3-phosphocholine. It catalyses the reaction 1-(9Z-octadecenoyl)-2-hexadecanoyl-sn-glycero-3-phosphocholine + N-(acetyl)-sphing-4-enine = 1-hexadecanoyl-N-(acetyl)-sphing-4-enine + 1-(9Z-octadecenoyl)-sn-glycero-3-phosphocholine. The enzyme catalyses 1-(9Z)-octadecenoyl-2-octadecanoyl-sn-glycero-3-phosphocholine + N-(acetyl)-sphing-4-enine = 1-octadecanoyl-N-(acetyl)-sphing-4-enine + 1-(9Z-octadecenoyl)-sn-glycero-3-phosphocholine. The catalysed reaction is 1,2-di-(9Z-octadecenoyl)-sn-glycero-3-phosphocholine + N-(acetyl)-sphing-4-enine = 1-(9Z-octadecenoyl)-N-(acetyl)-sphing-4-enine + 1-(9Z-octadecenoyl)-sn-glycero-3-phosphocholine. It carries out the reaction 1-octadecanoyl-2-(5Z,8Z,11Z,14Z-eicosatetraenoyl)-sn-glycero-3-phosphocholine + N-(acetyl)-sphing-4-enine = 1-(5Z,8Z,11Z,14Z)-eicosatetraenoyl-N-(acetyl)-sphing-4-enine + 1-octadecanoyl-sn-glycero-3-phosphocholine. It catalyses the reaction a 1,2-diacyl-sn-glycero-3-phospho-L-serine + N-(acetyl)-sphing-4-enine = a 2-acyl-sn-glycero-3-phospho-L-serine + 1-O-acyl-N-(acetyl)-sphing-4-enine. The enzyme catalyses 1-octadecanoyl-2-(9Z-octadecenoyl)-sn-glycero-3-phospho-L-serine + N-(acetyl)-sphing-4-enine = 2-(9Z-octadecenoyl)-sn-glycero-3-phospho-L-serine + 1-octadecanoyl-N-(acetyl)-sphing-4-enine. The catalysed reaction is a 1,2-diacyl-sn-glycero-3-phospho-L-serine + N-(acetyl)-sphing-4-enine = 1-O-acyl-N-(acetyl)-sphing-4-enine + a 1-acyl-sn-glycero-3-phospho-L-serine. It carries out the reaction 1-octadecanoyl-2-(9Z-octadecenoyl)-sn-glycero-3-phospho-L-serine + N-(acetyl)-sphing-4-enine = 1-octadecanoyl-sn-glycero-3-phosphoserine + 1-(9Z-octadecenoyl)-N-(acetyl)-sphing-4-enine. It catalyses the reaction a 1,2-diacyl-sn-glycero-3-phospho-(1'-sn-glycerol) + N-(acetyl)-sphing-4-enine = 2-acyl-sn-glycero-3-phospho-(1'-sn-glycerol) + 1-O-acyl-N-(acetyl)-sphing-4-enine. The enzyme catalyses 1-octadecanoyl-2-(9Z-octadecenoyl)-sn-glycero-3-phospho-(1'-sn-glycerol) + N-(acetyl)-sphing-4-enine = 2-(9Z-octadecenoyl)-sn-glycero-3-phospho-(1'-sn-glycerol) + 1-octadecanoyl-N-(acetyl)-sphing-4-enine. The catalysed reaction is a 1,2-diacyl-sn-glycero-3-phospho-(1'-sn-glycerol) + N-(acetyl)-sphing-4-enine = 1-O-acyl-N-(acetyl)-sphing-4-enine + 1-acyl-sn-glycero-3-phospho-(1'-sn-glycerol). It carries out the reaction 1-octadecanoyl-2-(9Z-octadecenoyl)-sn-glycero-3-phospho-(1'-sn-glycerol) + N-(acetyl)-sphing-4-enine = 1-octadecanoyl-sn-glycero-3-phospho-(1'-sn-glycerol) + 1-(9Z-octadecenoyl)-N-(acetyl)-sphing-4-enine. It catalyses the reaction an N-acylethanolamine + a 1,2-diacyl-sn-glycero-3-phosphocholine = 2-(acylamino)ethyl fatty acid + a 2-acyl-sn-glycero-3-phosphocholine. The enzyme catalyses an N-acylethanolamine + a 1,2-diacyl-sn-glycero-3-phosphocholine = 2-(acylamino)ethyl fatty acid + a 1-acyl-sn-glycero-3-phosphocholine. The catalysed reaction is N-(5Z,8Z,11Z,14Z-eicosatetraenoyl)-ethanolamine + 1,2-di-(9Z-octadecenoyl)-sn-glycero-3-phosphocholine = 2-[(5Z,8Z,11Z,14Z)-eicosatetraenoylamino]ethyl (9Z)-octadecenoate + (9Z-octadecenoyl)-sn-glycero-3-phosphocholine. It carries out the reaction N-(9Z-octadecenoyl) ethanolamine + 1,2-di-(9Z-octadecenoyl)-sn-glycero-3-phosphocholine = 2-[(9Z)-octadecenoylamino]ethyl (9Z)-octadecenoate + (9Z-octadecenoyl)-sn-glycero-3-phosphocholine. It catalyses the reaction a 3-acyl-sn-glycerol + a 1,2-diacyl-sn-glycero-3-phosphocholine = a 1,3-diacylglycerol + a 1-acyl-sn-glycero-3-phosphocholine. The enzyme catalyses a 3-acyl-sn-glycerol + a 1,2-diacyl-sn-glycero-3-phosphocholine = a 1,3-diacylglycerol + a 2-acyl-sn-glycero-3-phosphocholine. The catalysed reaction is 3-(9Z-octadecenoyl)-sn-glycerol + 1,2-di-(9Z-octadecenoyl)-sn-glycero-3-phosphocholine = 1,3-di-(9Z-octadecenoyl)-glycerol + (9Z-octadecenoyl)-sn-glycero-3-phosphocholine. It carries out the reaction 3-hexadecanoyl-sn-glycerol + 1,2-di-(9Z-octadecenoyl)-sn-glycero-3-phosphocholine = 1-(9Z)-octadecenoyl-3-hexadecanoyl-sn-glycerol + (9Z-octadecenoyl)-sn-glycero-3-phosphocholine. It catalyses the reaction a 1-acyl-sn-glycerol + a 1,2-diacyl-sn-glycero-3-phosphocholine = a 1,3-diacylglycerol + a 2-acyl-sn-glycero-3-phosphocholine. The enzyme catalyses a 1-acyl-sn-glycerol + a 1,2-diacyl-sn-glycero-3-phosphocholine = a 1,3-diacylglycerol + a 1-acyl-sn-glycero-3-phosphocholine. The catalysed reaction is 1-(9Z-octadecenoyl)-sn-glycerol + 1,2-di-(9Z-octadecenoyl)-sn-glycero-3-phosphocholine = 1,3-di-(9Z-octadecenoyl)-glycerol + (9Z-octadecenoyl)-sn-glycero-3-phosphocholine. It carries out the reaction 1-hexadecanoyl-sn-glycerol + 1,2-di-(9Z-octadecenoyl)-sn-glycero-3-phosphocholine = 1-hexadecanoyl-3-(9Z)-octadecenoyl-sn-glycerol + (9Z-octadecenoyl)-sn-glycero-3-phosphocholine. It catalyses the reaction a 2-acylglycerol + a 1,2-diacyl-sn-glycero-3-phosphocholine = a 1,2-diacylglycerol + a 2-acyl-sn-glycero-3-phosphocholine. The enzyme catalyses a 2-acylglycerol + a 1,2-diacyl-sn-glycero-3-phosphocholine = a 1,2-diacylglycerol + a 1-acyl-sn-glycero-3-phosphocholine. The catalysed reaction is 2-hexadecanoylglycerol + 1,2-di-(9Z-octadecenoyl)-sn-glycero-3-phosphocholine = 1-(9Z)-octadecenoyl-2-hexadecanoylglycerol + (9Z-octadecenoyl)-sn-glycero-3-phosphocholine. It carries out the reaction 1-O-alkylglycerol + a 1,2-diacyl-sn-glycero-3-phosphocholine = 1-O-alkyl-3-acylglycerol + a 1-acyl-sn-glycero-3-phosphocholine. It catalyses the reaction 1-O-alkylglycerol + a 1,2-diacyl-sn-glycero-3-phosphocholine = 1-O-alkyl-3-acylglycerol + a 2-acyl-sn-glycero-3-phosphocholine. The enzyme catalyses 1-O-hexadecylglycerol + 1,2-di-(9Z-octadecenoyl)-sn-glycero-3-phosphocholine = 1-O-hexadecyl-3-(9Z)-octadecenoylglycerol + (9Z-octadecenoyl)-sn-glycero-3-phosphocholine. The catalysed reaction is 1-O-alkyl-2-acyl-sn-glycerol + a 1,2-diacyl-sn-glycero-3-phosphocholine = 1-O-alkyl-2,3-diacyl-sn-glycerol + a 2-acyl-sn-glycero-3-phosphocholine. It carries out the reaction 1-O-alkyl-2-acyl-sn-glycerol + a 1,2-diacyl-sn-glycero-3-phosphocholine = 1-O-alkyl-2,3-diacyl-sn-glycerol + a 1-acyl-sn-glycero-3-phosphocholine. It catalyses the reaction 1-O-hexadecyl-2-acetyl-sn-glycerol + 1,2-di-(9Z-octadecenoyl)-sn-glycero-3-phosphocholine = 1-O-hexadecyl-2-acetyl-3-(9Z)-octadecenoyl-sn-glycerol + (9Z-octadecenoyl)-sn-glycero-3-phosphocholine. The enzyme catalyses 1-O-hexadecyl-2-O-methyl-sn-glycerol + 1,2-di-(9Z-octadecenoyl)-sn-glycero-3-phosphocholine = 1-O-hexadecyl-2-O-methyl-3-(9Z)-octadecenoyl-sn-glycerol + (9Z-octadecenoyl)-sn-glycero-3-phosphocholine. The catalysed reaction is a 1,2-diacyl-sn-glycero-3-phosphoethanolamine + H2O = a 1-acyl-sn-glycero-3-phosphoethanolamine + a fatty acid + H(+). It carries out the reaction 1-acyl-2-(5Z,8Z,11Z,14Z)-eicosatetraenoyl-sn-glycero-3-phosphoethanolamine + H2O = a 1-acyl-sn-glycero-3-phosphoethanolamine + (5Z,8Z,11Z,14Z)-eicosatetraenoate + H(+). It catalyses the reaction a 1,2-diacyl-sn-glycero-3-phospho-(1'-sn-glycerol) + H2O = 1-acyl-sn-glycero-3-phospho-(1'-sn-glycerol) + a fatty acid + H(+). The enzyme catalyses 1-hexadecanoyl-2-(9Z-octadecenoyl)-sn-glycero-3-phospho-(1'-sn-glycerol) + H2O = 1-hexadecanoyl-sn-glycero-3-phospho-(1'-sn-glycerol) + (9Z)-octadecenoate + H(+). The catalysed reaction is a 1,2-diacyl-sn-glycero-3-phospho-(1'-sn-glycerol) + H2O = 2-acyl-sn-glycero-3-phospho-(1'-sn-glycerol) + a fatty acid + H(+). It carries out the reaction 1-hexadecanoyl-2-(9Z-octadecenoyl)-sn-glycero-3-phospho-(1'-sn-glycerol) + H2O = 2-(9Z-octadecenoyl)-sn-glycero-3-phospho-(1'-sn-glycerol) + hexadecanoate + H(+). With respect to regulation, transacylase activity is completely inhibited by Triton X-100 and partially inhibited by heparin. Moderately activated by Mg(2+) and Ca(2+). In terms of biological role, has dual calcium-independent phospholipase and O-acyltransferase activities with a potential role in glycerophospholipid homeostasis and remodeling of acyl groups of lipophilic alcohols present in acidic cellular compartments. Catalyzes hydrolysis of the ester bond of the fatty acyl group attached at sn-1 or sn-2 position of phospholipids (phospholipase A1 or A2 activity) and transfer it to the hydroxyl group at the first carbon of lipophilic alcohols (O-acyltransferase activity). Among preferred fatty acyl donors are phosphatidylcholines, phosphatidylethanolamines, phosphatidylglycerols and phosphatidylserines. Favors sn-2 over sn-1 deacylation of unsaturated fatty acyl groups of phosphatidylcholines, phosphatidylethanolamines, and phosphatidylglycerols. Among preferred fatty acyl acceptors are natural lipophilic alcohols including short-chain ceramide N-acetyl-sphingosine (C2 ceramide), alkylacylglycerols, monoacylglycerols, and acylethanolamides such as anandamide and oleoylethanolamide. Selectively hydrolyzes the sn-1 fatty acyl group of truncated oxidized phospholipids and may play a role in detoxification of reactive oxidized phospholipids during oxidative stress. Required for normal phospholipid degradation in alveolar macrophages with potential implications in the clearance of pulmonary surfactant, which is mainly composed of dipalmitoylphosphatidylcholine (1,2-dihexadecanoyl-sn-glycero-3-phosphocholine). Involved in the first step of bis(monoacylglycero)phosphate (BMP) de novo synthesis from phosphatidylglycerol (1,2-diacyl-sn-glycero-3-phospho-(1'-sn-glycerol), PG). BMP is an important player in cargo sorting and degradation, regulation of cellular cholesterol levels and intercellular communication. At neutral pH, hydrolyzes the sn-1 fatty acyl group of the lysophosphatidylcholines. The polypeptide is Lysosomal phospholipase A and acyltransferase (PLA2G15) (Bos taurus (Bovine)).